A 107-amino-acid polypeptide reads, in one-letter code: UPF0122 protein BLi01817/BL02321 (107 aa).

It belongs to the UPF0122 family.

Functionally, might take part in the signal recognition particle (SRP) pathway. This is inferred from the conservation of its genetic proximity to ftsY/ffh. May be a regulatory protein. The protein is UPF0122 protein BLi01817/BL02321 of Bacillus licheniformis (strain ATCC 14580 / DSM 13 / JCM 2505 / CCUG 7422 / NBRC 12200 / NCIMB 9375 / NCTC 10341 / NRRL NRS-1264 / Gibson 46).